A 1017-amino-acid polypeptide reads, in one-letter code: MLKIFEKLFGSKHEKDVKKIQPTIQRINELQRALASLSDEQLRQKGRELKQKVRGVLEPMELEQQKLFHQLDSPNISLDEAESVNNKLDDLAVAYETATASVLEEILPDTFALVKETCARLKGHTYNVMGRQFVWNMVPYDVQLIGGIVLHSGKIAEMQTGEGKTLVSTLPTFLNALTGRGVHVVTVNDYLAQRDKEWMEPLFAFHNLSVGVILTSMHPALRRAQYLCDITYGTNNELGFDYLRDNMANTPEEMVQRKFYYAIVDEVDSVLIDEARTPLIISGPVPNADNSKFQEIKPWIEQLVRAQQQQIAAWLGDAETRMKTNATDPEAGLALLRVKRGQPKNSRFIKMLSQQGVAKLVQITENEYLKDNSSRMHEVDDALFYAVDEKANTIDLTDKGRDFLSKLSHQDSDIFLLPDVGTEIATIESNAALSTNDKIQHKDALYRLFSDRSERLHNISQLLKAYSLFERDDEYVVQNGQVMIVDEFTGRILPGRRYSDGLHQAIEAKENVKIEGETQTMATITIQNFFRLYKKLAGMTGTAETEASEFYEIYKLDVVVIPTNASVVRKDMDDLVYKTRREKYNAIAQKVEELQKRGQPVLVGTTSVEVSETLSRMLRTRRIAHNVLNAKQNDREAEIVAEAGQKGTVTIATNMAGRGTDIKLGDGVRELGGLYILGSERHESRRIDRQLRGRAGRQGDPGESVFYVSLEDELMRLFGSDRVIAVMDRLGHEEGDVIEHSMITKSIERAQKKVEEQNFAIRKRLLEYDDVLNQQREVIYSRRKNGLLKERLTSDILDLLKDYSDTIVKKYHKDFDTAGLEEQLMRDLSIEFQLDRATFEREGIDAVVDKVYETALTFYRRKEESLPADIMCQIEKYAVLTVIDQRWREHLREIDSLREGINLRAYGQKDPLIEYKQEAFRLFITLLKEIEAETLSLAFKLFPIDPEEQQQIEERQRQSAIRQEKLVAQHDVAESFVGLNDDDEPLPAQPITTEQKPGRNDLCPCGSGKKYKACCGQ.

Residues glutamine 143, 161 to 165, and aspartate 661 each bind ATP; that span reads GEGKT. The tract at residues 978 to 999 is disordered; that stretch reads GLNDDDEPLPAQPITTEQKPGR. Positions 1003, 1005, 1014, and 1015 each coordinate Zn(2+).

This sequence belongs to the SecA family. As to quaternary structure, monomer and homodimer. Part of the essential Sec protein translocation apparatus which comprises SecA, SecYEG and auxiliary proteins SecDF. Other proteins may also be involved. The cofactor is Zn(2+).

The protein localises to the cell inner membrane. It is found in the cytoplasm. It catalyses the reaction ATP + H2O + cellular proteinSide 1 = ADP + phosphate + cellular proteinSide 2.. Functionally, part of the Sec protein translocase complex. Interacts with the SecYEG preprotein conducting channel. Has a central role in coupling the hydrolysis of ATP to the transfer of proteins into and across the cell membrane, serving as an ATP-driven molecular motor driving the stepwise translocation of polypeptide chains across the membrane. This Chlorobium chlorochromatii (strain CaD3) protein is Protein translocase subunit SecA 1.